A 259-amino-acid chain; its full sequence is 3'-5' ssDNA/RNA exonuclease TatD (259 aa).

Residues E92, H128, and H153 each contribute to the a divalent metal cation site.

This sequence belongs to the metallo-dependent hydrolases superfamily. TatD-type hydrolase family. TatD subfamily. In terms of assembly, monomer. The cofactor is Mg(2+).

The protein localises to the cytoplasm. In terms of biological role, 3'-5' exonuclease that prefers single-stranded DNA and RNA. May play a role in the H(2)O(2)-induced DNA damage repair. This Erwinia tasmaniensis (strain DSM 17950 / CFBP 7177 / CIP 109463 / NCPPB 4357 / Et1/99) protein is 3'-5' ssDNA/RNA exonuclease TatD.